Consider the following 580-residue polypeptide: Microcin-J25 export ATP-binding/permease protein McjD (580 aa).

A run of 6 helical transmembrane segments spans residues 25 to 45 (FFSM…SPLI), 66 to 86 (VLLA…VFLF), 143 to 163 (VSQN…VVLS), 167 to 187 (WFSA…NTRL), 261 to 281 (AVIL…NGVV), and 286 to 306 (FIMI…IGAL). Residues 25-312 (FFSMLFITSL…IGALLSEIRQ (288 aa)) form the ABC transmembrane type-1 domain. An ABC transporter domain is found at 345 to 578 (LSIRELSFSY…NEYISGLASV (234 aa)). 378-385 (GPSGSGKS) contacts ATP.

It belongs to the ABC transporter superfamily. Homodimer.

The protein localises to the cell inner membrane. In terms of biological role, is able to protect a cell, which harbors the plasmid pTUC100 encoding microcin J25, against microcin J25. Is required for microcin J25 export out of the producing cells. This is Microcin-J25 export ATP-binding/permease protein McjD (mcjD) from Escherichia coli.